Here is a 930-residue protein sequence, read N- to C-terminus: Xanthan lyase (930 aa).

Residues 1–25 (MLSGILIAALLMTLWGGWQPDIAHA) form the signal peptide. Xanthan is bound by residues 146–148 (NWW), histidine 246, tyrosine 255, arginine 309, 313–315 (RSY), and asparagine 424. The active-site Proton donor/acceptor is tyrosine 255. 3 residues coordinate Ca(2+): aspartate 515, aspartate 516, and glutamate 517. A xanthan-binding site is contributed by arginine 612. Residue glutamate 676 coordinates Ca(2+).

This sequence belongs to the polysaccharide lyase 8 family. As to quaternary structure, monomer.

The protein resides in the secreted. The catalysed reaction is Eliminative cleavage of the terminal beta-D-mannosyl-(1-&gt;4)-beta-D-glucuronosyl linkage of the side-chain of the polysaccharide xanthan, leaving a 4-deoxy-alpha-L-threo-hex-4-enuronosyl group at the terminus of the side-chain.. With respect to regulation, activated by Co(2+) at 1 mM. Completely inhibited by Hg(2+) but not affected by other divalent cations. Intensely inhibited by NaCl and KCl at 150 mM, in particular by the Na(+) and K(+) ions but not the Cl(-) ions. Partially inhibited by iodoacetamide and N-ethylmaleimide at 1 mM but not by dithiothreitol, reduced glutathione or 2-mercaptoethanol. Plays a role in xanthan depolymerization pathway by cleaving the linkage between the terminal mannosyl and glucuronyl residues of the side chain of xanthan to liberate pyruvylated mannose. Is highly specific for pyruvylated side-chains of xanthan and is not effective with hyaluronate, chondroitin A, gellan, heparin or pectin. The sequence is that of Xanthan lyase from Bacillus sp. (strain GL1).